The sequence spans 121 residues: Basic phospholipase A2 BbTX-III (121 aa).

Residues Y27, G29, and G31 each coordinate Ca(2+). Disulfide bonds link C28–C44, C43–C95, C49–C121, C50–C88, C58–C82, and C76–C86. H47 is a catalytic residue. Residue D48 coordinates Ca(2+). D89 is an active-site residue.

The protein belongs to the phospholipase A2 family. Group II subfamily. D49 sub-subfamily. As to quaternary structure, homodimer; non-covalently linked. Ca(2+) serves as cofactor. Expressed by the venom gland.

The protein localises to the secreted. It catalyses the reaction a 1,2-diacyl-sn-glycero-3-phosphocholine + H2O = a 1-acyl-sn-glycero-3-phosphocholine + a fatty acid + H(+). Functionally, snake venom phospholipase A2 (PLA2) that exhibits myotoxin and anticoagulant activity. Displays edema-inducing activities in mouse paw. Also displays cytotoxic activity against some cell lines and myotubes, and antimicrobial activities against E.coli, C.albicans and Leishmania. PLA2 catalyzes the calcium-dependent hydrolysis of the 2-acyl groups in 3-sn-phosphoglycerides. This chain is Basic phospholipase A2 BbTX-III, found in Bothrops brazili (Brazil's lancehead).